Consider the following 639-residue polypeptide: Elongation factor 4 (639 aa).

Residues alanine 39–threonine 220 enclose the tr-type G domain. GTP contacts are provided by residues aspartate 51–threonine 56 and asparagine 167–aspartate 170.

Belongs to the TRAFAC class translation factor GTPase superfamily. Classic translation factor GTPase family. LepA subfamily.

Its subcellular location is the cell membrane. It catalyses the reaction GTP + H2O = GDP + phosphate + H(+). Functionally, required for accurate and efficient protein synthesis under certain stress conditions. May act as a fidelity factor of the translation reaction, by catalyzing a one-codon backward translocation of tRNAs on improperly translocated ribosomes. Back-translocation proceeds from a post-translocation (POST) complex to a pre-translocation (PRE) complex, thus giving elongation factor G a second chance to translocate the tRNAs correctly. Binds to ribosomes in a GTP-dependent manner. The protein is Elongation factor 4 of Mycobacterium sp. (strain JLS).